We begin with the raw amino-acid sequence, 270 residues long: Type III pantothenate kinase (270 aa).

6-13 (DVRNTHTV) contributes to the ATP binding site. 109 to 112 (GADR) lines the substrate pocket. Asp-111 functions as the Proton acceptor in the catalytic mechanism. Asp-131 is a binding site for K(+). Ser-134 contributes to the ATP binding site. Thr-186 serves as a coordination point for substrate.

It belongs to the type III pantothenate kinase family. In terms of assembly, homodimer. NH4(+) is required as a cofactor. Requires K(+) as cofactor.

Its subcellular location is the cytoplasm. It carries out the reaction (R)-pantothenate + ATP = (R)-4'-phosphopantothenate + ADP + H(+). It functions in the pathway cofactor biosynthesis; coenzyme A biosynthesis; CoA from (R)-pantothenate: step 1/5. In terms of biological role, catalyzes the phosphorylation of pantothenate (Pan), the first step in CoA biosynthesis. The polypeptide is Type III pantothenate kinase (Mycolicibacterium gilvum (strain PYR-GCK) (Mycobacterium gilvum (strain PYR-GCK))).